The sequence spans 175 residues: Anterior gradient protein 2 homolog (175 aa).

The N-terminal stretch at 1–20 (MEKISVSAFLLLVALSYTLA) is a signal peptide. The segment at 21–40 (RDTTVKPAAKKDTKDSRPKL) is required to promote cell adhesion. 2 consecutive short sequence motifs (homodimer stabilization; interchain) follow at residues 45–54 (SRGWGDQLIW) and 60–67 (EALYKSKT).

This sequence belongs to the AGR family. As to quaternary structure, monomer and homodimer. Interacts with LYPD3 and DAG1 (alphaDAG1). Interacts with MUC2; disulfide-linked.

It localises to the secreted. Its subcellular location is the endoplasmic reticulum. Required for MUC2 post-transcriptional synthesis and secretion. May play a role in the production of mucus by intestinal cells. Proto-oncogene that may play a role in cell migration, cell differentiation and cell growth. Promotes cell adhesion. The chain is Anterior gradient protein 2 homolog (AGR2) from Pongo abelii (Sumatran orangutan).